A 295-amino-acid polypeptide reads, in one-letter code: Glutamyl-Q tRNA(Asp) synthetase (295 aa).

L-glutamate is bound by residues 9–13 (RFAPT) and glutamate 45. The 'HIGH' region motif lies at 12-22 (PTPSGFLHFGS). 4 residues coordinate Zn(2+): cysteine 101, cysteine 103, tyrosine 115, and cysteine 119. L-glutamate-binding residues include tyrosine 172 and arginine 190. The 'KMSKS' region motif lies at 228–232 (KLGKS). Lysine 231 lines the ATP pocket.

It belongs to the class-I aminoacyl-tRNA synthetase family. GluQ subfamily. Requires Zn(2+) as cofactor.

In terms of biological role, catalyzes the tRNA-independent activation of glutamate in presence of ATP and the subsequent transfer of glutamate onto a tRNA(Asp). Glutamate is transferred on the 2-amino-5-(4,5-dihydroxy-2-cyclopenten-1-yl) moiety of the queuosine in the wobble position of the QUC anticodon. The sequence is that of Glutamyl-Q tRNA(Asp) synthetase from Pseudomonas putida (strain GB-1).